A 293-amino-acid polypeptide reads, in one-letter code: MSPLADHRFLKMNGLGNEIVVLDLRASSHVVRPEEARAIAADPRSRFDQLMVLHDPVTPGTDARLRIYNRDGSESGACGNGTRCVAWAMRADPVMGRAGEQLTLESAAGLLAVTRVSDTDFTVDMGPPHLRWDEIPLSEPFPDTRRIELQIGPIDAPILHSPGVVSMGNPHAVFFVDRDPETYDLGRIGPLLEAHPLFPERANISLAQVVAADRIRLRVWERGAGLTRACGSAACAALVAAARLRLTGRRATVTLPGGDLVIAWGEDDHVRMTGPTELEWEGRFPPALFAGAA.

Asn-17, Gln-49, and Asn-69 together coordinate substrate. The Proton donor role is filled by Cys-78. Residues 79-80 (GN), Asn-169, Asn-203, and 221-222 (ER) contribute to the substrate site. Residue Cys-230 is the Proton acceptor of the active site. Substrate is bound at residue 231 to 232 (GS).

The protein belongs to the diaminopimelate epimerase family. As to quaternary structure, homodimer.

Its subcellular location is the cytoplasm. The enzyme catalyses (2S,6S)-2,6-diaminopimelate = meso-2,6-diaminopimelate. Its pathway is amino-acid biosynthesis; L-lysine biosynthesis via DAP pathway; DL-2,6-diaminopimelate from LL-2,6-diaminopimelate: step 1/1. Catalyzes the stereoinversion of LL-2,6-diaminopimelate (L,L-DAP) to meso-diaminopimelate (meso-DAP), a precursor of L-lysine and an essential component of the bacterial peptidoglycan. This Methylobacterium sp. (strain 4-46) protein is Diaminopimelate epimerase.